We begin with the raw amino-acid sequence, 229 residues long: Enolase-phosphatase E1 (229 aa).

A disordered region spans residues 207 to 229 (RDPASHHPQVQRFDDIHPEQIPA). Basic and acidic residues predominate over residues 218–229 (RFDDIHPEQIPA).

It belongs to the HAD-like hydrolase superfamily. MasA/MtnC family. In terms of assembly, monomer. Mg(2+) serves as cofactor.

It carries out the reaction 5-methylsulfanyl-2,3-dioxopentyl phosphate + H2O = 1,2-dihydroxy-5-(methylsulfanyl)pent-1-en-3-one + phosphate. Its pathway is amino-acid biosynthesis; L-methionine biosynthesis via salvage pathway; L-methionine from S-methyl-5-thio-alpha-D-ribose 1-phosphate: step 3/6. It functions in the pathway amino-acid biosynthesis; L-methionine biosynthesis via salvage pathway; L-methionine from S-methyl-5-thio-alpha-D-ribose 1-phosphate: step 4/6. Functionally, bifunctional enzyme that catalyzes the enolization of 2,3-diketo-5-methylthiopentyl-1-phosphate (DK-MTP-1-P) into the intermediate 2-hydroxy-3-keto-5-methylthiopentenyl-1-phosphate (HK-MTPenyl-1-P), which is then dephosphorylated to form the acireductone 1,2-dihydroxy-3-keto-5-methylthiopentene (DHK-MTPene). The sequence is that of Enolase-phosphatase E1 from Klebsiella pneumoniae subsp. pneumoniae (strain ATCC 700721 / MGH 78578).